Here is a 131-residue protein sequence, read N- to C-terminus: Auxin-responsive protein SAUR77 (131 aa).

This sequence belongs to the ARG7 family.

Functionally, may be involved in the regulation of ethylene receptor signaling. Promotes cell expansion and plant growth. In Arabidopsis thaliana (Mouse-ear cress), this protein is Auxin-responsive protein SAUR77.